We begin with the raw amino-acid sequence, 155 residues long: Putative pre-16S rRNA nuclease (155 aa).

This sequence belongs to the YqgF nuclease family.

The protein resides in the cytoplasm. Functionally, could be a nuclease involved in processing of the 5'-end of pre-16S rRNA. This chain is Putative pre-16S rRNA nuclease, found in Corynebacterium jeikeium (strain K411).